The sequence spans 146 residues: Large ribosomal subunit protein bL19 (146 aa).

Belongs to the bacterial ribosomal protein bL19 family.

Functionally, this protein is located at the 30S-50S ribosomal subunit interface and may play a role in the structure and function of the aminoacyl-tRNA binding site. The polypeptide is Large ribosomal subunit protein bL19 (Bartonella quintana (strain Toulouse) (Rochalimaea quintana)).